The following is a 78-amino-acid chain: Hainantoxin-XX.2 (78 aa).

The first 23 residues, 1 to 23 (MKSATLLALSYLLIALYFLICEA), serve as a signal peptide directing secretion. Positions 24–47 (EHSRYEEHEILEENMGDVVNLEQR) are excised as a propeptide. 3 disulfides stabilise this stretch: C49–C62, C56–C66, and C61–C77.

Belongs to the hainantoxin family. 20 subfamily. In terms of tissue distribution, expressed by the venom gland.

The protein resides in the secreted. In terms of biological role, moderately inhibits Kv1.1/KCNA1 and Kv1.2/KCNA2 and weakly inhibits Kv1.3/KCNA3, and Kv2.1/KCNB1 voltage-gated potassium channels. In Cyriopagopus hainanus (Chinese bird spider), this protein is Hainantoxin-XX.2.